The chain runs to 102 residues: Large ribosomal subunit protein bL28 (102 aa).

The tract at residues 1–20 (MSRRCELTAKGPQVGHKVSH) is disordered.

This sequence belongs to the bacterial ribosomal protein bL28 family.

The polypeptide is Large ribosomal subunit protein bL28 (Bradyrhizobium sp. (strain BTAi1 / ATCC BAA-1182)).